The primary structure comprises 312 residues: Zinc transporter ZitB (312 aa).

5 helical membrane passes run 21–41 (LLFAFIVTAGFMLLEVVGGIL), 48–68 (LADAGHMLTDAAALLFALLVV), 90–110 (AAFVNAIALVVITLLIVWEAI), 123–143 (LMMVIAVAGLLANLFAFWILH), and 164–184 (LLGSVGAIVAALIIIWTGWTP).

This sequence belongs to the cation diffusion facilitator (CDF) transporter (TC 2.A.4) family. SLC30A subfamily.

It is found in the cell inner membrane. In terms of biological role, involved in zinc efflux across the cytoplasmic membrane, thus reducing zinc accumulation in the cytoplasm and rendering bacteria more resistant to zinc. It may contribute to zinc homeostasis at low concentrations of zinc. The chain is Zinc transporter ZitB from Salmonella typhi.